Consider the following 381-residue polypeptide: MPKILVSAGEASGDLYASLVVQELRRIMPDAEFFGCTGPRLRAAGVRTIVDSADLAVVGLIEVVAHIPRIYGEFRKLLRAAREERPLLAILTDSPDFHLRVARKLHRQEVPVVYLVAPQAWAWRRGRVREMRRTIRRLLCIFPFEEEFFRRYGVPATYIGHPLAGLVHPALSREEFFKKHRLAAERPLVSVLPGSRRGEAARHIPALLDAVDRIYREQAVNVVLPASATTGVAFFQERMGNSPIRVIEGESWDAMAHSDLALAASGTVTVEAALLGTPMVTFYKVTGVSWLAGKFLVDIPFYSMVNLIAGRAVVPELMQSQMTGENLAREALRLLQGGRDREEMKAGLAQVKEKLAGRTGAPGRAALAIQEILEGQVTHVS.

Belongs to the LpxB family.

It catalyses the reaction a lipid X + a UDP-2-N,3-O-bis[(3R)-3-hydroxyacyl]-alpha-D-glucosamine = a lipid A disaccharide + UDP + H(+). It participates in bacterial outer membrane biogenesis; LPS lipid A biosynthesis. In terms of biological role, condensation of UDP-2,3-diacylglucosamine and 2,3-diacylglucosamine-1-phosphate to form lipid A disaccharide, a precursor of lipid A, a phosphorylated glycolipid that anchors the lipopolysaccharide to the outer membrane of the cell. In Solibacter usitatus (strain Ellin6076), this protein is Lipid-A-disaccharide synthase.